Here is a 932-residue protein sequence, read N- to C-terminus: Valine--tRNA ligase (932 aa).

Positions 75–85 match the 'HIGH' region motif; that stretch reads PNVTGQLHMGH. Residues 568-572 carry the 'KMSKS' region motif; sequence KMSKS. Lys-571 is a binding site for ATP. Residues 863 to 929 adopt a coiled-coil conformation; it reads TVDVAAERKR…ERITARLEGL (67 aa).

This sequence belongs to the class-I aminoacyl-tRNA synthetase family. ValS type 1 subfamily. Monomer.

The protein localises to the cytoplasm. The enzyme catalyses tRNA(Val) + L-valine + ATP = L-valyl-tRNA(Val) + AMP + diphosphate. Catalyzes the attachment of valine to tRNA(Val). As ValRS can inadvertently accommodate and process structurally similar amino acids such as threonine, to avoid such errors, it has a 'posttransfer' editing activity that hydrolyzes mischarged Thr-tRNA(Val) in a tRNA-dependent manner. This is Valine--tRNA ligase from Corynebacterium jeikeium (strain K411).